A 983-amino-acid polypeptide reads, in one-letter code: Nuclear factor NF-kappa-B p105 subunit (983 aa).

Residues 47–372 (PYLQIIEQPK…EVQRKRQKLM (326 aa)) form the RHD domain. An S-nitrosocysteine modification is found at C66. Residue S342 is modified to Phosphoserine; by PKA. Residues 365–370 (QRKRQK) carry the Nuclear localization signal motif. Positions 377–397 (DGYGGGSGAGGGGMFGGGGGG) are GRR. The disordered stretch occupies residues 423–454 (KSNAGMKHELSNSTVKKDEESSDKQSDKWDTK). Residues 428–454 (MKHELSNSTVKKDEESSDKQSDKWDTK) are compositionally biased toward basic and acidic residues. 7 ANK repeats span residues 540–569 (NGDN…DMNY), 579–608 (LYQT…NVNL), 612–641 (HGNS…ASSM), 648–677 (EGLS…DVNA), 682–712 (SGRT…DVDS), 716–745 (DGTT…DPHV), and 769–799 (PGTT…AVSE). The Death domain maps to 804-891 (QGPLRELNES…EAIEVIQKAL (88 aa)). Phosphoserine is present on S938.

Active NF-kappa-B is a heterodimer of an about 50 kDa DNA-binding subunit and the weak DNA-binding subunit p65. Two heterodimers might form a labile tetramer. In terms of processing, generation of the NF-kappa-B p50 (Nuclear factor NF-kappa-B p50 subunit) transcription factor takes place both cotranslationally and post-translationally via non-mutually exclusive mechanisms. A cotranslational processing allows the production of both p50 and p105 (Nuclear factor NF-kappa-B p105 subunit) from a single NFKB1 mRNA. While translation occurs, the particular unfolded structure after the GRR repeat region acts as a substrate for the proteasome, promoting degradation of the C-terminus. The GRR acts as a proteasomal 'stop signal', protecting the region upstream of the GRR from degradation and promoting generation of p50. It is unclear if limited proteasome degradation during cotranslational processing depends on ubiquitination. NF-kappa-B p50 is also generated post-translationally following ubiquitination by the KPC complex, leading to limited processing by the proteasome downstream of the GRR region, thereby generating p50. Phosphorylation at the C-terminus by IKBKB/IKKB acts as a signal for ubiquitination and promotes either complete degradation or processing to generate the NF-kappa-B p50 (Nuclear factor NF-kappa-B p50 subunit). Phosphorylation at Ser-938 are required for BTRC/BTRCP-mediated ubiquitination and proteolysis. Phosphorylation at Ser-938 is also required for ubiquitination by the KPC complex and limited processing to generate NF-kappa-B p50 (Nuclear factor NF-kappa-B p50 subunit). Post-translationally, polyubiquitinated at multiple Lys residues in the C-terminus. Polyubiquitinated by the SCF(FBXW11) and SCF(BTRC) complexes following phosphorylation at Ser-938, leading to its complete degradation. In contrast, polyubiquitination by the KPC complex following phosphorylation at Ser-938 leads to limited proteosomal processing and generation of the active NF-kappa-B p50 (Nuclear factor NF-kappa-B p50 subunit). In terms of processing, S-nitrosylation of Cys-66 affects DNA binding. The covalent modification of cysteine by 15-deoxy-Delta12,14-prostaglandin-J2 is autocatalytic and reversible. It may occur as an alternative to other cysteine modifications, such as S-nitrosylation and S-palmitoylation.

The protein resides in the cytoplasm. The protein localises to the nucleus. Functionally, P105 is the precursor of the active p50 subunit (Nuclear factor NF-kappa-B p50 subunit) of the nuclear factor NF-kappa-B. The precursor protein itself does not bind to DNA. Acts as a cytoplasmic retention of attached NF-kappa-B proteins by p105. Its function is as follows. Constitutes the active form, which associates with RELA/p65 to form the NF-kappa-B p65-p50 complex to form a transcription factor. Together with RELA/p65, binds to the kappa-B consensus sequence 5'-GGRNNYYCC-3', located in the enhancer region of genes involved in immune response and acute phase reactions. This is Nuclear factor NF-kappa-B p105 subunit (NFKB1) from Gallus gallus (Chicken).